We begin with the raw amino-acid sequence, 391 residues long: Multidrug resistance protein MdtL (391 aa).

12 helical membrane-spanning segments follow: residues 4-24 (FLICSFALVLLYPAGIDMYLV), 42-62 (IAFSVYLAGMAAAMLFAGKVA), 69-89 (PVAIPGAALFIIASVFCSLAE), 93-113 (LFLAGRFLQGLGAGCCYVVAF), 131-151 (LLNGITCIIPVLAPVLGHLIM), 158-178 (SLFWTMAMMGIAVLMLSLFIL), 203-222 (FFLSRVVITTLSVSVILTFV), 245-265 (ALTAGVSMTVSFSTPFALGIF), 269-289 (TLMITSQVLFLAAGITLAVSP), 293-313 (VSLFGITLICAGFSVGFGVAM), 331-351 (LGIAQVCGSSLWIWLAAVVGI), and 356-376 (MLIGILIACSIVSLLLIMFVA).

This sequence belongs to the major facilitator superfamily. DHA1 family. MdtL (TC 2.A.1.2.22) subfamily.

The protein resides in the cell inner membrane. Its function is as follows. Confers resistance to chloramphenicol. The protein is Multidrug resistance protein MdtL of Escherichia coli O139:H28 (strain E24377A / ETEC).